Here is a 175-residue protein sequence, read N- to C-terminus: Protein TWIN SISTER of FT (175 aa).

This sequence belongs to the phosphatidylethanolamine-binding protein family.

It localises to the cytoplasm. Its function is as follows. May form complexes with phosphorylated ligands by interfering with kinases and their effectors. The chain is Protein TWIN SISTER of FT (TSF) from Arabidopsis thaliana (Mouse-ear cress).